We begin with the raw amino-acid sequence, 500 residues long: Glycerol kinase (500 aa).

Threonine 16 serves as a coordination point for ADP. The ATP site is built by threonine 16 and threonine 17. Threonine 16 provides a ligand contact to sn-glycerol 3-phosphate. Arginine 20 contacts ADP. The sn-glycerol 3-phosphate site is built by arginine 86, glutamate 87, tyrosine 138, and aspartate 243. Glycerol contacts are provided by arginine 86, glutamate 87, tyrosine 138, aspartate 243, and glutamine 244. The ADP site is built by threonine 265 and glycine 313. ATP contacts are provided by threonine 265, glycine 313, glutamine 317, and glycine 414. Residues glycine 414 and asparagine 418 each contribute to the ADP site.

The protein belongs to the FGGY kinase family.

It carries out the reaction glycerol + ATP = sn-glycerol 3-phosphate + ADP + H(+). Its pathway is polyol metabolism; glycerol degradation via glycerol kinase pathway; sn-glycerol 3-phosphate from glycerol: step 1/1. Inhibited by fructose 1,6-bisphosphate (FBP). Functionally, key enzyme in the regulation of glycerol uptake and metabolism. Catalyzes the phosphorylation of glycerol to yield sn-glycerol 3-phosphate. This Nostoc sp. (strain PCC 7120 / SAG 25.82 / UTEX 2576) protein is Glycerol kinase.